A 494-amino-acid chain; its full sequence is Nicotianamine aminotransferase 1 (494 aa).

2 stretches are compositionally biased toward low complexity: residues 24-38 (SGTS…TSSS) and 48-62 (STAM…AASS). The disordered stretch occupies residues 24–76 (SGTSYPTRTTTTSSSAPEFTNKKQSTAMAPTTAAAAASSNGGGESDGSSKEWR). Lys322 carries the N6-(pyridoxal phosphate)lysine modification.

It belongs to the class-I pyridoxal-phosphate-dependent aminotransferase family. Requires pyridoxal 5'-phosphate as cofactor. Expressed in companion and pericycle cells adjacent to the protoxylem of roots. Expressed in companion cells of shoots.

The enzyme catalyses nicotianamine + 2-oxoglutarate = 3''-deamino-3''-oxonicotianamine + L-glutamate. Its function is as follows. Involved in biosynthesis of mugineic acid family phytosiderophores, which are ferric iron chelators produced in graminaceous plants in response to iron deficiency. The polypeptide is Nicotianamine aminotransferase 1 (Oryza sativa subsp. japonica (Rice)).